The sequence spans 257 residues: MLILISPAKTLDYQSPLATTRYTQPELLEYSQQLIGIARKLSAPQIGKLMSISDKLADLNATRFHDWHPDFTPQNARQAILAFKGDVYTGLQAETLTEDDFDFAQQHLRMLSGLYGVLRPLDLMQPYRLEMGIRLENPRGKDLYQFWGDTITEKLNQALRDQGDDIVINLASDEYFKSVKTPKLQGQLIKPVFLDEKNGKFKVISFYAKKARGLMSRYIIENRLTQPEQLKAFNSEGYFFDADASEKGELVFKRHEQ.

The Helix-hairpin-helix signature appears at 35–66 (IGIARKLSAPQIGKLMSISDKLADLNATRFHD).

Belongs to the UPF0246 family.

The protein localises to the cytoplasm. In terms of biological role, protects bacteria from neutrophil-related defense upon infection of mammals. Binds DNA. This is DNA-binding and peroxide stress resistance protein YaaA from Klebsiella pneumoniae subsp. pneumoniae (strain HS11286).